A 173-amino-acid polypeptide reads, in one-letter code: Archaemetzincin (173 aa).

His130 contributes to the Zn(2+) binding site. Glu131 functions as the Proton acceptor in the catalytic mechanism. Residues His134, His140, Cys141, Cys146, Cys165, and Cys168 each coordinate Zn(2+).

The protein belongs to the peptidase M54 family. Monomer. It depends on Zn(2+) as a cofactor.

Functionally, probable zinc metalloprotease whose natural substrate is unknown. The sequence is that of Archaemetzincin from Natronomonas pharaonis (strain ATCC 35678 / DSM 2160 / CIP 103997 / JCM 8858 / NBRC 14720 / NCIMB 2260 / Gabara) (Halobacterium pharaonis).